The chain runs to 524 residues: MVLQKLPLIGLLLLLTIVASPANADGPVCPPSNKLSRASFPEGFLFGTATAAYQVEGAINETCRGPALWDIYCRRYPERCNNDNGDVAVDFFHRYKEDIQLMKNLNTDAFRMSIAWPRIFPHGRKEKGVSQAGVQFYHDLIDELIKNGITPFVTVFHWDTPQDLEDEYGGFLSERIVKDFREYADFVFQEYGGKVKHWITFNEPWVFSHAGYDVGKKAPGRCSSYVNAKCQDGRSGYEAYLVTHNLLISHAEAVEAYRKCEKCKGGKIGIAHSPAWFEAHDLADSQDGASIDRALDFILGWHLDTTTFGDYPQIMKDIVGHRLPKFTTEQKAKLKASTDFVGLNYYTSVFSNHLEKPDPSKPRWMQDSLITWESKNAQNYAIGSKPLTAALNVYSRGFRSLLKYIKDKYANPEIMIMENGYGEELGASDSVAVGTADHNRKYYLQRHLLSMQEAVCIDKVNVTGYFVWSLLDNFEWQDGYKNRFGLYYVDFKNNLTRYEKESGKYYKDFLSQGVRPSALKKDEL.

The N-terminal stretch at 1-24 (MVLQKLPLIGLLLLLTIVASPANA) is a signal peptide. Glutamine 54 serves as a coordination point for a beta-D-glucoside. Asparagine 60 carries N-linked (GlcNAc...) asparagine glycosylation. A beta-D-glucoside is bound by residues histidine 157 and 202 to 203 (NE). Residue glutamate 203 is the Proton donor of the active site. A disulfide bridge links cysteine 222 with cysteine 230. Positions 346 and 418 each coordinate a beta-D-glucoside. The active-site Nucleophile is the glutamate 418. N-linked (GlcNAc...) asparagine glycosylation occurs at asparagine 461. Residues tryptophan 468, 475-476 (EW), and phenylalanine 484 contribute to the a beta-D-glucoside site. A glycan (N-linked (GlcNAc...) asparagine) is linked at asparagine 494. The short motif at 521–524 (KDEL) is the Prevents secretion from ER element.

This sequence belongs to the glycosyl hydrolase 1 family. Homodimers. Binds to the deubiquitinating enzyme AMSH3. The inactive form interacts with PBP1/JAL30 to form the PYK10 complex, at least composed of PYK10/BGLU23, BGLU21, BGLU22, JAL22, JAL23, PBP1/JAL30, PBP2/JAL31, JAL32, JAL33, JAL34, JAL35, GLL22 and GLL23. Forms interchain disulfide bonds. In terms of tissue distribution, expressed exclusively in roots.

The protein localises to the endoplasmic reticulum lumen. The catalysed reaction is Hydrolysis of terminal, non-reducing beta-D-glucosyl residues with release of beta-D-glucose.. Activated by tissue damage and upon binding to PBP1 or PBP2. Functionally, beta-D-glucosidase active on scopolin &gt; esculin &gt;&gt; 4-MU-glucoside &gt;&gt; DIMBOA-glucoside. No activity with pNP-glucoside, oNP-glucoside and sinigrin as substrates. May possess beta-D-fucosidase activity. Required for the beneficial interaction with the endophytic fungus P.indica. May participate in the control of root colonization by P.indica by repressing defense responses and modulating other responses required for a mutualistic interaction. This is Beta-glucosidase 23 from Arabidopsis thaliana (Mouse-ear cress).